Consider the following 260-residue polypeptide: Imidazole glycerol phosphate synthase subunit HisF (260 aa).

Residues Asp11 and Asp130 contribute to the active site.

The protein belongs to the HisA/HisF family. As to quaternary structure, heterodimer of HisH and HisF.

Its subcellular location is the cytoplasm. The catalysed reaction is 5-[(5-phospho-1-deoxy-D-ribulos-1-ylimino)methylamino]-1-(5-phospho-beta-D-ribosyl)imidazole-4-carboxamide + L-glutamine = D-erythro-1-(imidazol-4-yl)glycerol 3-phosphate + 5-amino-1-(5-phospho-beta-D-ribosyl)imidazole-4-carboxamide + L-glutamate + H(+). The protein operates within amino-acid biosynthesis; L-histidine biosynthesis; L-histidine from 5-phospho-alpha-D-ribose 1-diphosphate: step 5/9. In terms of biological role, IGPS catalyzes the conversion of PRFAR and glutamine to IGP, AICAR and glutamate. The HisF subunit catalyzes the cyclization activity that produces IGP and AICAR from PRFAR using the ammonia provided by the HisH subunit. The chain is Imidazole glycerol phosphate synthase subunit HisF from Thermomicrobium roseum (strain ATCC 27502 / DSM 5159 / P-2).